Reading from the N-terminus, the 198-residue chain is Putative glutathione S-transferase alpha-2 (198 aa).

At S2 the chain carries N-acetylserine. Residues 5-81 enclose the GST N-terminal domain; the sequence is SVPSLTYFQG…YIAKKHNFMG (77 aa). Glutathione-binding positions include Y11, R45, 52–53, and 65–66; these read QL and QS. Residues 83–198 form the GST C-terminal domain; the sequence is NLEEEFLVDQ…YIKERPETKF (116 aa).

It belongs to the GST superfamily. Alpha family.

The enzyme catalyses RX + glutathione = an S-substituted glutathione + a halide anion + H(+). Conjugation of reduced glutathione to a wide number of exogenous and endogenous hydrophobic electrophiles. The sequence is that of Putative glutathione S-transferase alpha-2 (gsta2-1) from Dictyostelium discoideum (Social amoeba).